We begin with the raw amino-acid sequence, 353 residues long: DNA-directed RNA polymerase subunit alpha (353 aa).

The tract at residues 1 to 226 (MLISQRPTLT…ELFGLARELN (226 aa)) is alpha N-terminal domain (alpha-NTD). The interval 241–353 (ADHIASFGLP…TEDYAETEQL (113 aa)) is alpha C-terminal domain (alpha-CTD). The disordered stretch occupies residues 326-353 (ATGTWSDTDAGSFGDAEGTEDYAETEQL). Positions 342 to 353 (EGTEDYAETEQL) are enriched in acidic residues.

Belongs to the RNA polymerase alpha chain family. As to quaternary structure, homodimer. The RNAP catalytic core consists of 2 alpha, 1 beta, 1 beta' and 1 omega subunit. When a sigma factor is associated with the core the holoenzyme is formed, which can initiate transcription.

The enzyme catalyses RNA(n) + a ribonucleoside 5'-triphosphate = RNA(n+1) + diphosphate. Functionally, DNA-dependent RNA polymerase catalyzes the transcription of DNA into RNA using the four ribonucleoside triphosphates as substrates. The chain is DNA-directed RNA polymerase subunit alpha from Rhodococcus jostii (strain RHA1).